A 292-amino-acid chain; its full sequence is Xyloglucan endotransglucosylase/hydrolase protein A (292 aa).

An N-terminal signal peptide occupies residues 1-20 (MGSSLWTCLILLSLASASFA). The region spanning 21–219 (ANPRTPIDVP…WSKAPFIASY (199 aa)) is the GH16 domain. Residue Glu-105 is the Nucleophile of the active site. Glu-109 (proton donor) is an active-site residue. Residue Glu-109 participates in xyloglucan binding. Asn-113 is a glycosylation site (N-linked (GlcNAc...) asparagine). Residues 122-124 (QTN), 132-134 (DRE), 198-199 (DW), and Gly-203 each bind xyloglucan. Disulfide bonds link Cys-227–Cys-236 and Cys-273–Cys-286. Arg-278 is a xyloglucan binding site.

It belongs to the glycosyl hydrolase 16 family. XTH group 1 subfamily. In terms of processing, contains at least one intrachain disulfide bond essential for its enzymatic activity. In terms of tissue distribution, predominantly expressed in the phloem fibers of growing internodes. Expressed in xylem cells in the basal part of the internode. In the internode, it is expressed closer to the top of the internode compared to XTHB.

The protein resides in the secreted. Its subcellular location is the cell wall. It localises to the extracellular space. The protein localises to the apoplast. It carries out the reaction breaks a beta-(1-&gt;4) bond in the backbone of a xyloglucan and transfers the xyloglucanyl segment on to O-4 of the non-reducing terminal glucose residue of an acceptor, which can be a xyloglucan or an oligosaccharide of xyloglucan.. Its function is as follows. Catalyzes xyloglucan endohydrolysis (XEH) and/or endotransglycosylation (XET). Cleaves and religates xyloglucan polymers, an essential constituent of the primary cell wall, and thereby participates in cell wall construction of growing tissues. The chain is Xyloglucan endotransglucosylase/hydrolase protein A (XTHA) from Phaseolus angularis (Azuki bean).